The following is a 224-amino-acid chain: Metalloproteinase inhibitor 4 (224 aa).

The N-terminal stretch at 1-29 (MPGSPRPAPSWVLLLRLLALLRPPGLGEA) is a signal peptide. Cys30 provides a ligand contact to Zn(2+). 2 involved in metalloproteinase-binding regions span residues 30–33 (CSCA) and 99–100 (SS). 6 disulfide bridges follow: Cys30–Cys102, Cys32–Cys131, Cys42–Cys156, Cys158–Cys205, Cys163–Cys168, and Cys176–Cys197. The 127-residue stretch at 30 to 156 (CSCAPAHPQQ…SLNHHYHLNC (127 aa)) folds into the NTR domain.

The protein belongs to the protease inhibitor I35 (TIMP) family. Abundant in heart and present at low levels in many other tissues.

Its subcellular location is the secreted. Its function is as follows. Complexes with metalloproteinases (such as collagenases) and irreversibly inactivates them by binding to their catalytic zinc cofactor. Known to act on MMP-1, MMP-2, MMP-3, MMP-7 and MMP-9. The sequence is that of Metalloproteinase inhibitor 4 (TIMP4) from Homo sapiens (Human).